The chain runs to 243 residues: Probable 6-oxopurine nucleoside phosphorylase (243 aa).

Phosphate is bound by residues threonine 8 and 48–49; that span reads RH. Residue methionine 174 participates in substrate binding. Threonine 175 provides a ligand contact to phosphate. 198–200 provides a ligand contact to substrate; it reads NYA.

It belongs to the PNP/MTAP phosphorylase family. MTAP subfamily. Homohexamer. Dimer of a homotrimer.

It carries out the reaction a purine D-ribonucleoside + phosphate = a purine nucleobase + alpha-D-ribose 1-phosphate. It functions in the pathway purine metabolism; purine nucleoside salvage. Purine nucleoside phosphorylase which is highly specific for 6-oxopurine nucleosides. Cleaves guanosine or inosine to respective bases and sugar-1-phosphate molecules. Involved in purine salvage. The polypeptide is Probable 6-oxopurine nucleoside phosphorylase (Archaeoglobus fulgidus (strain ATCC 49558 / DSM 4304 / JCM 9628 / NBRC 100126 / VC-16)).